Consider the following 901-residue polypeptide: Alpha-actinin-3 (901 aa).

Met-1 carries the N-acetylmethionine modification. The tract at residues 1–261 (MMMVMQPEGL…IMTYVSCFYH (261 aa)) is actin-binding. 2 consecutive Calponin-homology (CH) domains span residues 45 to 149 (KQQR…LRFA) and 158 to 264 (TSAK…HAFA). Spectrin repeat units lie at residues 288–398 (KLME…WLLS), 408–513 (HLAE…ALER), 523–634 (RLQL…TLQE), and 644–747 (RLRR…EVEN). EF-hand domains are found at residues 760–795 (EQLN…MGYD) and 796–831 (LGEV…ETAE). Asp-773, Asn-777, Met-779, Asp-784, Asp-809, and Asn-811 together coordinate Ca(2+).

Belongs to the alpha-actinin family. In terms of assembly, homodimer; antiparallel. Also forms heterodimers with ACTN2. Interacts with MYOZ1. Expression restricted to fast (type 2) skeletal muscle fibers (at protein level).

In terms of biological role, F-actin cross-linking protein which is thought to anchor actin to a variety of intracellular structures. This is a bundling protein. The chain is Alpha-actinin-3 (ACTN3) from Homo sapiens (Human).